Here is a 506-residue protein sequence, read N- to C-terminus: MRDPLTDCSYNKVYKSLKEFAQHGDNFCKQITSVLQQRANLEISYAKGLQKLAVRLSKALQSTKKNCLSTAWAWASESMKSAADLHQKLGKAIELEAIKPTHQVLSMQEKKRKSLDNEVEKTANLVINNWNQQIKAKKKLMMSTKKHEALFHLVESSKQSLTQKEKQKLLNKLKKSTEKLEKEDESYYQKNMAGYSTRLKWESTLENCYKSMLELEKERIQLLCNNLNQYSQHISLFGQTLTTCHTQIHCAISKVDVEKDIQALMEETAILSIENKSELLLADYFEEDPKNPMDKERRKSLLKPKLGRLQRDIEKASRDKEGLERKLKALASSSSFSDAKSQKDMETLMDENSLKLDLLQANSYKLSSVLADLEQRPKPCHPCSTCIFKWKEKEHSHTYVKISRPLLTKRLEKAESKAPAGGQNNPSSSPSGSTVSQASKHLCKALYTFQARQDDELNLEKGDIVTVHEKKEEGWWFGSLKGKRGHFPAAYVEELPPKAGNTATQA.

The region spanning 1 to 260 is the F-BAR domain; sequence MRDPLTDCSY…AISKVDVEKD (260 aa). The residue at position 114 (serine 114) is a Phosphoserine. Coiled coils occupy residues 160–230 and 305–334; these read SLTQ…LNQY and KLGR…ASSS. Positions 292–372 constitute an REM-1 domain; the sequence is PMDKERRKSL…SYKLSSVLAD (81 aa). Residues 413–435 are disordered; it reads KAESKAPAGGQNNPSSSPSGSTV. The span at 419–435 shows a compositional bias: low complexity; it reads PAGGQNNPSSSPSGSTV. Residues 438–497 form the SH3 domain; sequence ASKHLCKALYTFQARQDDELNLEKGDIVTVHEKKEEGWWFGSLKGKRGHFPAAYVEELPP. Phosphoserine is present on serine 479.

Homotrimer. Interacts with NOS3, DNM2, WASL and CAV1. Interacts with DAB2. Interacts (via SH3 domain) with DNM2; this interaction allows the recruitment of NOS3 to dynamin-positive structures.

The protein localises to the cell membrane. It is found in the cytoplasmic vesicle. It localises to the cytoplasm. The protein resides in the cytoskeleton. Its subcellular location is the nucleus. In terms of biological role, multivalent adapter protein which may decrease NOS3 activity by inducing its translocation away from the plasma membrane. In Mus musculus (Mouse), this protein is Nostrin.